Consider the following 244-residue polypeptide: Protein-L-isoaspartate O-methyltransferase (244 aa).

Positions 1 to 39 (MINPFSSFRWRHSSRSPAGIPEVEPQPPDASDPFASQRE) are disordered. The active site involves serine 92.

It belongs to the methyltransferase superfamily. L-isoaspartyl/D-aspartyl protein methyltransferase family.

Its subcellular location is the cytoplasm. The enzyme catalyses [protein]-L-isoaspartate + S-adenosyl-L-methionine = [protein]-L-isoaspartate alpha-methyl ester + S-adenosyl-L-homocysteine. Functionally, catalyzes the methyl esterification of L-isoaspartyl residues in peptides and proteins that result from spontaneous decomposition of normal L-aspartyl and L-asparaginyl residues. It plays a role in the repair and/or degradation of damaged proteins. This is Protein-L-isoaspartate O-methyltransferase from Synechococcus sp. (strain JA-2-3B'a(2-13)) (Cyanobacteria bacterium Yellowstone B-Prime).